Here is a 236-residue protein sequence, read N- to C-terminus: CD81 antigen (236 aa).

Residues 1-12 (MGVEGCTKCIKY) lie on the Cytoplasmic side of the membrane. The chain crosses the membrane as a helical span at residues 13-33 (LLFVFNFVFWLAGGVILGVAL). Residues 34-63 (WLRHDPQTTNLLYLELGDKPAPNTFYVGIY) are Extracellular-facing. Residues 64-84 (ILIAVGAVMMFVGFLGCYGAI) form a helical membrane-spanning segment. Over 85–89 (QESQC) the chain is Cytoplasmic. The helical transmembrane segment at 90-112 (LLGTFFTCLVILFACEVAAGIWG) threads the bilayer. The Extracellular portion of the chain corresponds to 113-201 (FVNKDQIAKD…QKIDDLFSGK (89 aa)). 2 disulfides stabilise this stretch: cysteine 156-cysteine 190 and cysteine 157-cysteine 175. A helical membrane pass occupies residues 202–224 (LYLIGIAAIVVAVIMIFEMILSM). Glutamate 219 contributes to the cholesterol binding site. The Cytoplasmic segment spans residues 225 to 236 (VLCCGIRNSSVY).

This sequence belongs to the tetraspanin (TM4SF) family. As to quaternary structure, homodimer. Part of a complex composed of CD19, CR2/CD21, CD81 and IFITM1/CD225 in the membrane of mature B cells. Interacts (via the second extracellular domain) with CD19; this interaction is initiated early during biosynthesis in the ER and enables trafficking of only properly folded CD19. Part of a complex that includes MHC class II/HLA-DR molecules and IFITM1. Interacts with IFITM1. Interacts with IFITM2 and IFITM3. Part of integrin-tetraspanin complex composed of CD9, CD81, beta-1 and beta-2 integrins in the membrane of monocyte/macrophages. Interacts (via the second extracellular domain) with integrin ITGAV:ITGB3. Interacts with CD247/CD3 zeta, ICAM1 and CD9 at the immune synapse on T cell membrane. Part of a GPCR-tetraspanin complex consisting at least of ADGRG1, CD81, possibly CD9, and GNA11 in which CD81 enhances the association of ADGRG1 with GNA11. Part of a complex composed of CD9, CD81, PTGFRN and IGSF8. Interacts directly with IGSF8. Interacts with CD53 and SCIMP. Interacts with SAMHD1 (via its C-terminus). Interacts with glypican GPC3 and with the transcriptional repressor HHEX; binding to GPC3 decreases the availability of free CD81 for binding to HHEX, resulting in nuclear translocation of HHEX and transcriptional repression. Interacts with CLDN1. Interacts with CLDN6 and CLDN9. Not glycosylated. Post-translationally, likely constitutively palmitoylated at low levels. Protein palmitoylation is up-regulated upon coligation of BCR and CD9-C2R-CD81 complexes in lipid rafts.

It is found in the cell membrane. The protein localises to the basolateral cell membrane. Functionally, structural component of specialized membrane microdomains known as tetraspanin-enriched microdomains (TERMs), which act as platforms for receptor clustering and signaling. Essential for trafficking and compartmentalization of CD19 receptor on the surface of activated B cells. Upon initial encounter with microbial pathogens, enables the assembly of CD19-CR2/CD21 and B cell receptor (BCR) complexes at signaling TERMs, lowering the threshold dose of antigen required to trigger B cell clonal expansion and antibody production. In T cells, facilitates the localization of CD247/CD3 zeta at antigen-induced synapses with B cells, providing for costimulation and polarization toward T helper type 2 phenotype. Present in MHC class II compartments, may also play a role in antigen presentation. Can act both as positive and negative regulator of homotypic or heterotypic cell-cell fusion processes. Positively regulates sperm-egg fusion and may be involved in acrosome reaction. In myoblasts, associates with CD9 and PTGFRN and inhibits myotube fusion during muscle regeneration. In macrophages, associates with CD9 and beta-1 and beta-2 integrins, and prevents macrophage fusion into multinucleated giant cells specialized in ingesting complement-opsonized large particles. Also prevents the fusion of mononuclear cell progenitors into osteoclasts in charge of bone resorption. May regulate the compartmentalization of enzymatic activities. In T cells, defines the subcellular localization of dNTPase SAMHD1 and permits its degradation by the proteasome, thereby controlling intracellular dNTP levels. Also involved in cell adhesion and motility. Positively regulates integrin-mediated adhesion of macrophages, particularly relevant for the inflammatory response in the lung. The polypeptide is CD81 antigen (CD81) (Pan troglodytes (Chimpanzee)).